Consider the following 91-residue polypeptide: Potassium channel toxin AaTXK-beta (91 aa).

Positions 1 to 19 (MQRNLVVLLFLGMVALSSC) are cleaved as a signal peptide. A propeptide spanning residues 20–27 (GLREKHVQ) is cleaved from the precursor. The BetaSPN-type CS-alpha/beta domain maps to 54-91 (QFGCPAYQGYCDDHCQDIKKEEGFCHGFKCKCGIPMGF). Intrachain disulfides connect cysteine 57–cysteine 78, cysteine 64–cysteine 83, and cysteine 68–cysteine 85.

This sequence belongs to the long chain scorpion toxin family. Class 1 subfamily. Monomer (both chains). As to expression, expressed by the venom gland.

It is found in the secreted. In terms of biological role, inhibits voltage-gated potassium channels (Kv). Does not activate Kv7 channels. Peptide activator of Kv7.4/KCNQ4 channels. Also acts as a subtype-selective activator of channels formed by Kv7.3/KCNQ3, Kv7.2/Kv7.3 (KCNQ2/KCNQ3), Kv7.5/Kv7.3 (KCNQ3/KCNQ5) subunits. In Androctonus australis (Sahara scorpion), this protein is Potassium channel toxin AaTXK-beta.